Consider the following 496-residue polypeptide: Probable cytosol aminopeptidase (496 aa).

Mn(2+)-binding residues include K258 and D263. The active site involves K270. Mn(2+)-binding residues include D281, D340, and E342. R344 is an active-site residue.

This sequence belongs to the peptidase M17 family. Requires Mn(2+) as cofactor.

It is found in the cytoplasm. It carries out the reaction Release of an N-terminal amino acid, Xaa-|-Yaa-, in which Xaa is preferably Leu, but may be other amino acids including Pro although not Arg or Lys, and Yaa may be Pro. Amino acid amides and methyl esters are also readily hydrolyzed, but rates on arylamides are exceedingly low.. The catalysed reaction is Release of an N-terminal amino acid, preferentially leucine, but not glutamic or aspartic acids.. Its function is as follows. Presumably involved in the processing and regular turnover of intracellular proteins. Catalyzes the removal of unsubstituted N-terminal amino acids from various peptides. In Helicobacter pylori (strain P12), this protein is Probable cytosol aminopeptidase.